Reading from the N-terminus, the 480-residue chain is Glutamate--tRNA ligase (480 aa).

The 'HIGH' region signature appears at 21-31; sequence PSPTGYLHVGG. A compositionally biased stretch (basic and acidic residues) spans 122–146; the sequence is NTQEQNKQKPRYDRHCLGDHKHSPE. Positions 122-149 are disordered; the sequence is NTQEQNKQKPRYDRHCLGDHKHSPEQPH. A 'KMSKS' region motif is present at residues 248–252; the sequence is KLSKR. ATP is bound at residue lysine 251.

It belongs to the class-I aminoacyl-tRNA synthetase family. Glutamate--tRNA ligase type 1 subfamily. Monomer.

It is found in the cytoplasm. It carries out the reaction tRNA(Glu) + L-glutamate + ATP = L-glutamyl-tRNA(Glu) + AMP + diphosphate. Its function is as follows. Catalyzes the attachment of glutamate to tRNA(Glu) in a two-step reaction: glutamate is first activated by ATP to form Glu-AMP and then transferred to the acceptor end of tRNA(Glu). This Pasteurella multocida (strain Pm70) protein is Glutamate--tRNA ligase.